The primary structure comprises 447 residues: Exodeoxyribonuclease 7 large subunit (447 aa).

Belongs to the XseA family. In terms of assembly, heterooligomer composed of large and small subunits.

It is found in the cytoplasm. The catalysed reaction is Exonucleolytic cleavage in either 5'- to 3'- or 3'- to 5'-direction to yield nucleoside 5'-phosphates.. Functionally, bidirectionally degrades single-stranded DNA into large acid-insoluble oligonucleotides, which are then degraded further into small acid-soluble oligonucleotides. The chain is Exodeoxyribonuclease 7 large subunit from Streptococcus mutans serotype c (strain ATCC 700610 / UA159).